A 549-amino-acid chain; its full sequence is MISKCTFSATVFSLFSLCWGAPSSPVLEAPHTIPLPAAMRVQTGESGFSLKNGVRLPEKNPLSRQAERIFRDNGINTALVKNNADIIFTEDASLGREGYRLAVTPDSISIASGSVNGTLYALQSLVQSIAADKNGAPALPRMDVKDQPRFSWRGLMVDSCRHMMPVRDIKKVLDLMERYKFNTLHWHLTDDQGWRLPIAKYPRLTTVGGARAQSPVIGNRNKGDGIPYSGHYTADEIRDVVRYARDRGITVIPEVEMPGHASAAIAAYPELGNTDIPGYEPRVQETWGVHSYTFSPTEKTFRFLEDVIDEICALFPDSPYIHIGGDEAPKNQWKQSPTAQRVMKDNGLANEHELQSYFIRRVEKMINNRGKRLIGWDEIQEGGLSPTATMMVWRSQMPHIAAQALAQGNDIVMTPNSHLYFDYDQGPGKPAAPEYETINNNQLTWQHVYGLEPVPQGTPREREKQVLGCQANIWTEYIPNLPKWEYHVFPRALALAEVAWTPQELKNEKDFRKRLDRQLPFLDARGVNYKRPDNGAPAQPKAVITRERR.

The signal sequence occupies residues 1–28 (MISKCTFSATVFSLFSLCWGAPSSPVLE). Arginine 161 contributes to the substrate binding site. Residues aspartate 190 and histidine 260 each act as charge relay system in the active site. Aspartate 326 provides a ligand contact to substrate. Glutamate 327 serves as the catalytic Charge relay system. Residues tryptophan 393, 420–422 (YFD), and 474–476 (WTE) each bind substrate. A disordered region spans residues 526–549 (GVNYKRPDNGAPAQPKAVITRERR).

Belongs to the glycosyl hydrolase 20 family.

It catalyses the reaction Hydrolysis of terminal non-reducing N-acetyl-D-hexosamine residues in N-acetyl-beta-D-hexosaminides.. With respect to regulation, inhibited strongly by Cu(2+), Zn(2+), Cd(2+) and Ni(2+) ions. No effect on activity with Na(+), Li(+), K(+), Ca(2+), Mg(2+) or Mn(2+) ions. Potentially capable of cleaving the specific glycoside linkages in the process of mucin degradation in human intestinal tract. Hydrolyzes chromogenic substrates pNP-beta-GlcNAc with high activity and pNP-beta-GalNAc to a lesser extent, but not pNP-beta-glucose or pNP-beta-galactose. This is Beta-hexosaminidase Amuc_0868 from Akkermansia muciniphila (strain ATCC BAA-835 / DSM 22959 / JCM 33894 / BCRC 81048 / CCUG 64013 / CIP 107961 / Muc).